Here is a 170-residue protein sequence, read N- to C-terminus: Peptidyl-prolyl cis-trans isomerase-like 3 (170 aa).

Positions 1–160 constitute a PPIase cyclophilin-type domain; sequence MSVTLHTDLG…QEFRIKSVTI (160 aa).

This sequence belongs to the cyclophilin-type PPIase family. PPIL3 subfamily.

The enzyme catalyses [protein]-peptidylproline (omega=180) = [protein]-peptidylproline (omega=0). In terms of biological role, PPIases accelerate the folding of proteins. It catalyzes the cis-trans isomerization of proline imidic peptide bonds in oligopeptides. The sequence is that of Peptidyl-prolyl cis-trans isomerase-like 3 (cyp4) from Rhizopus delemar (strain RA 99-880 / ATCC MYA-4621 / FGSC 9543 / NRRL 43880) (Mucormycosis agent).